Reading from the N-terminus, the 227-residue chain is Flagellar L-ring protein (227 aa).

The signal sequence occupies residues 1 to 15 (MRTWAVLPILLMLVG). A lipid anchor (N-palmitoyl cysteine) is attached at Cys16. Residue Cys16 is the site of S-diacylglycerol cysteine attachment.

This sequence belongs to the FlgH family. In terms of assembly, the basal body constitutes a major portion of the flagellar organelle and consists of four rings (L,P,S, and M) mounted on a central rod.

The protein resides in the cell outer membrane. The protein localises to the bacterial flagellum basal body. Its function is as follows. Assembles around the rod to form the L-ring and probably protects the motor/basal body from shearing forces during rotation. The sequence is that of Flagellar L-ring protein from Syntrophotalea carbinolica (strain DSM 2380 / NBRC 103641 / GraBd1) (Pelobacter carbinolicus).